The following is a 340-amino-acid chain: HTH-type transcriptional regulator VirS (340 aa).

In terms of domain architecture, HTH araC/xylS-type spans 236-334; that stretch reads ERVVGLARRL…GMTPRQYRAY (99 aa). 2 DNA-binding regions (H-T-H motif) span residues 254–275 and 301–324; these read EAIA…AAEG and LSQI…RRWF.

Phosphorylated by PknK. Phosphorylation increases affinity for the mymA promoter.

Regulates the expression of the mymA operon. This is HTH-type transcriptional regulator VirS (virS) from Mycobacterium tuberculosis (strain CDC 1551 / Oshkosh).